Reading from the N-terminus, the 496-residue chain is Probable ATP-dependent DNA helicase RecS (496 aa).

Residues 25–192 form the Helicase ATP-binding domain; that stretch reads IESILSGKDT…MNLLELQHAV (168 aa). 38-45 lines the ATP pocket; the sequence is LPTGGGKS. The short motif at 136–139 is the DEAH box element; sequence DEAH. The Helicase C-terminal domain occupies 219–363; the sequence is RVIQLVENLQ…EIADVIRVLE (145 aa).

The protein belongs to the helicase family. RecQ subfamily. In terms of assembly, interacts with SSB (ssbA) and YpbB.

It is found in the cytoplasm. Its subcellular location is the nucleoid. The enzyme catalyses Couples ATP hydrolysis with the unwinding of duplex DNA by translocating in the 3'-5' direction.. The catalysed reaction is ATP + H2O = ADP + phosphate + H(+). Probable 3'-5' DNA helicase. Required in synaptic and/or post-synaptic stages of recombination. Probably has an overlapping function with RecQ. It probably acts to help generate ss-DNA from ds-DNA breaks. This is Probable ATP-dependent DNA helicase RecS from Bacillus subtilis (strain 168).